Consider the following 437-residue polypeptide: UDP-N-acetylmuramate--L-alanine ligase (437 aa).

An ATP-binding site is contributed by 108–114 (GAHGKTS).

The protein belongs to the MurCDEF family.

The protein localises to the cytoplasm. It catalyses the reaction UDP-N-acetyl-alpha-D-muramate + L-alanine + ATP = UDP-N-acetyl-alpha-D-muramoyl-L-alanine + ADP + phosphate + H(+). It participates in cell wall biogenesis; peptidoglycan biosynthesis. In terms of biological role, cell wall formation. In Staphylococcus aureus, this protein is UDP-N-acetylmuramate--L-alanine ligase.